A 214-amino-acid chain; its full sequence is MHRHSVLRLARQAGGLPLVELPPPYLAPSLHFSLIRSPVQSSNFSSTTPVAGHGRDLSKSRGVSAIHRTGPKFKLGVSKYPLPKPVSPEALEKRNPTPDHGLWGFFPKDRQALSTPEYDHAHGRSWSIQELREKSWEDLHALWWVCVKERNRIATSNLERERLKAGYGEYESSERDRVIRVTQNGIKHVLRERWYAWEDAQKLYKDGYRPQDEE.

This sequence belongs to the universal ribosomal protein uL29 family. As to quaternary structure, component of the mitochondrial large ribosomal subunit. Mature mitochondrial ribosomes consist of a small (37S) and a large (54S) subunit. The 37S subunit contains at least 33 different proteins and 1 molecule of RNA (15S). The 54S subunit contains at least 45 different proteins and 1 molecule of RNA (21S).

Its subcellular location is the mitochondrion. The chain is Large ribosomal subunit protein uL29m (mrpl4) from Aspergillus terreus (strain NIH 2624 / FGSC A1156).